Reading from the N-terminus, the 794-residue chain is cAMP and cAMP-inhibited cGMP 3',5'-cyclic phosphodiesterase 10A (794 aa).

Residues 296-297 (RC), 340-341 (IA), Thr-374, Gln-393, and His-525 contribute to the 3',5'-cyclic AMP site. A PDEase domain is found at 452–769 (TSEEWQGLMH…NQWEKVIRGE (318 aa)). His-525 (proton donor) is an active-site residue. His-525 is a binding site for 3',5'-cyclic GMP. Positions 529, 563, 564, and 674 each coordinate a divalent metal cation. Gln-726 lines the 3',5'-cyclic AMP pocket. Gln-726 is a binding site for 3',5'-cyclic GMP.

This sequence belongs to the cyclic nucleotide phosphodiesterase family. Homodimer. Requires a divalent metal cation as cofactor. As to expression, detected in striatum and testis (at protein level). Detected in whole brain, hippocampus, olfactory bulb, striatum neurons and testis.

Its subcellular location is the cytoplasm. The protein resides in the cytosol. The catalysed reaction is a nucleoside 3',5'-cyclic phosphate + H2O = a nucleoside 5'-phosphate + H(+). It carries out the reaction 3',5'-cyclic AMP + H2O = AMP + H(+). The enzyme catalyses 3',5'-cyclic GMP + H2O = GMP + H(+). Its pathway is purine metabolism; 3',5'-cyclic AMP degradation; AMP from 3',5'-cyclic AMP: step 1/1. It functions in the pathway purine metabolism; 3',5'-cyclic GMP degradation; GMP from 3',5'-cyclic GMP: step 1/1. With respect to regulation, inhibited by dipyridamole and moderately by IBMX, zaprinast and rolipram. Plays a role in signal transduction by regulating the intracellular concentration of cyclic nucleotides. Can hydrolyze both cAMP and cGMP, but has higher affinity for cAMP and is more efficient with cAMP as substrate. This is cAMP and cAMP-inhibited cGMP 3',5'-cyclic phosphodiesterase 10A (Pde10a) from Rattus norvegicus (Rat).